The chain runs to 138 residues: Small ribosomal subunit protein uS11c (138 aa).

The tract at residues 1 to 22 (MAKAIPKISSRRNGRISSRKGA) is disordered. The segment covering 9-22 (SSRRNGRISSRKGA) has biased composition (basic residues).

This sequence belongs to the universal ribosomal protein uS11 family. Part of the 30S ribosomal subunit.

It is found in the plastid. It localises to the chloroplast. The protein is Small ribosomal subunit protein uS11c of Solanum bulbocastanum (Wild potato).